A 206-amino-acid chain; its full sequence is Orotate phosphoribosyltransferase (206 aa).

5-phospho-alpha-D-ribose 1-diphosphate contacts are provided by residues R114, K115, K118, H120, and 141 to 149 (EDVVTTGQS). 2 residues coordinate orotate: T145 and R173.

Belongs to the purine/pyrimidine phosphoribosyltransferase family. PyrE subfamily. As to quaternary structure, homodimer. The cofactor is Mg(2+).

The catalysed reaction is orotidine 5'-phosphate + diphosphate = orotate + 5-phospho-alpha-D-ribose 1-diphosphate. Its pathway is pyrimidine metabolism; UMP biosynthesis via de novo pathway; UMP from orotate: step 1/2. Functionally, catalyzes the transfer of a ribosyl phosphate group from 5-phosphoribose 1-diphosphate to orotate, leading to the formation of orotidine monophosphate (OMP). The protein is Orotate phosphoribosyltransferase of Nostoc sp. (strain PCC 7120 / SAG 25.82 / UTEX 2576).